We begin with the raw amino-acid sequence, 538 residues long: Coiled-coil domain-containing protein 8 (538 aa).

The segment at 58–128 is disordered; the sequence is IMEKSTPHPP…QGPRRGKKVR (71 aa). A compositionally biased stretch (basic residues) spans 119-128; it reads QGPRRGKKVR. A phosphoserine mark is found at Ser142, Ser146, and Ser261. Positions 213–473 are disordered; that stretch reads WAPRAGPGVG…GTAPGARARK (261 aa). Residues 301–313 are compositionally biased toward basic and acidic residues; that stretch reads DSQREEAIADQRE. Positions 321–332 are enriched in low complexity; that stretch reads AGAPADQGAEAA. Residues 349–366 adopt a coiled-coil conformation; that stretch reads AEEGAEAADNQREEAADN. Basic and acidic residues-rich tracts occupy residues 357-373, 381-392, and 405-419; these read DNQR…EAPA, DNHREEAADNQR, and DNQR…RERA. Low complexity-rich tracts occupy residues 428–438 and 458–469; these read QRAQARAGQRA and AAQGTTGTAPGA. Residues 500–506 carry the PxLPxI/L motif; mediates interaction with ANKRA2 motif; that stretch reads PRLPTLP. Residues 514-535 adopt a coiled-coil conformation; it reads EARNLRVLRAEARAEAEQGEQE.

As to quaternary structure, component of the 3M complex, composed of core components CUL7, CCDC8 and OBSL1. Interacts (via PxLPxI/L motif) with ANKRA2 (via ankyrin repeats); may link the 3M complex to histone deacetylases including HDAC4 and HDAC5. As to expression, widely expressed with low levels in spleen, skeletal muscle, small intestine, kidney and liver.

It localises to the cytoplasm. The protein resides in the cytoskeleton. The protein localises to the microtubule organizing center. Its subcellular location is the centrosome. Its function is as follows. Core component of the 3M complex, a complex required to regulate microtubule dynamics and genome integrity. It is unclear how the 3M complex regulates microtubules, it could act by controlling the level of a microtubule stabilizer. Required for localization of CUL7 to the centrosome. The sequence is that of Coiled-coil domain-containing protein 8 (CCDC8) from Homo sapiens (Human).